A 100-amino-acid chain; its full sequence is Spleen trypsin inhibitor I (100 aa).

Positions methionine 1 to alanine 21 are cleaved as a signal peptide. Residues serine 22–lysine 33 constitute a propeptide that is removed on maturation. In terms of domain architecture, BPTI/Kunitz inhibitor spans cysteine 40–cysteine 90. 3 disulfide bridges follow: cysteine 40–cysteine 90, cysteine 49–cysteine 73, and cysteine 65–cysteine 86. Residue leucine 100 is a propeptide.

The protein localises to the secreted. This is Spleen trypsin inhibitor I from Bos taurus (Bovine).